The chain runs to 911 residues: Isoleucine--tRNA ligase (911 aa).

Residues 57–67 carry the 'HIGH' region motif; the sequence is PYANGHIHIGH. Residue E564 coordinates L-isoleucyl-5'-AMP. Residues 605-609 carry the 'KMSKS' region motif; the sequence is KMSKS. K608 contributes to the ATP binding site. 4 residues coordinate Zn(2+): C887, C890, C902, and C905.

The protein belongs to the class-I aminoacyl-tRNA synthetase family. IleS type 1 subfamily. Monomer. It depends on Zn(2+) as a cofactor.

The protein localises to the cytoplasm. It carries out the reaction tRNA(Ile) + L-isoleucine + ATP = L-isoleucyl-tRNA(Ile) + AMP + diphosphate. In terms of biological role, catalyzes the attachment of isoleucine to tRNA(Ile). As IleRS can inadvertently accommodate and process structurally similar amino acids such as valine, to avoid such errors it has two additional distinct tRNA(Ile)-dependent editing activities. One activity is designated as 'pretransfer' editing and involves the hydrolysis of activated Val-AMP. The other activity is designated 'posttransfer' editing and involves deacylation of mischarged Val-tRNA(Ile). The protein is Isoleucine--tRNA ligase of Nautilia profundicola (strain ATCC BAA-1463 / DSM 18972 / AmH).